Here is a 1388-residue protein sequence, read N- to C-terminus: Rho-associated protein kinase 2 (1388 aa).

The segment at 1–24 (MSRPPPTGKMPGAPEAVSGDGAGA) is disordered. One can recognise a Protein kinase domain in the interval 92–354 (YDVVKVIGRG…VEEIKQHPFF (263 aa)). Residues 98–106 (IGRGAFGEV) and Lys-121 contribute to the ATP site. Asp-214 functions as the Proton acceptor in the catalytic mechanism. The AGC-kinase C-terminal domain occupies 357-425 (DQWNWDNIRE…YRENLLLSDS (69 aa)). Positions 363-784 (NIRETAAPVV…INELLKQKDV (422 aa)) are interaction with PPP1R12A. The interval 373–420 (PELSSDIDSSNFDDIEDDKGDVETFPIPKAFVGNQLPFIGFTYYRENL) is interaction with NPM1. Position 414 is a phosphothreonine; by ROCK2 (Thr-414). One can recognise an REM-1 domain in the interval 497 to 573 (ALRQLEREKA…LDETNALLRT (77 aa)). Over residues 512–530 (NAEYQRKADHEADKKRNLE) the composition is skewed to basic and acidic residues. The segment at 512 to 532 (NAEYQRKADHEADKKRNLEND) is disordered. Position 722 is a phosphotyrosine; by SRC (Tyr-722). The RhoBD domain occupies 979–1047 (TSDVANLANE…LAEIMNRKEP (69 aa)). The segment at 979-1047 (TSDVANLANE…LAEIMNRKEP (69 aa)) is RHOA binding. Positions 1054-1126 (TDMRRKEKEN…EQLRSQLQAL (73 aa)) form a coiled coil. At Ser-1137 the chain carries Phosphoserine. The 200-residue stretch at 1150-1349 (ESRLEGWLSL…WVSRLVKKIP (200 aa)) folds into the PH domain. Thr-1212 is modified (phosphothreonine). The Phorbol-ester/DAG-type zinc finger occupies 1260–1315 (GHEFIPTLYHFPTNCEACMKPLWHMFKPPPALECRRCHIKCHKDHMDKKEEIIAPC). A disordered region spans residues 1345 to 1388 (VKKIPKKPPAPDPFARSSPRTSMKIQQNQSIRRPSRQLAANKPS). Ser-1362 and Ser-1374 each carry phosphoserine. The span at 1362–1376 (SPRTSMKIQQNQSIR) shows a compositional bias: polar residues.

It belongs to the protein kinase superfamily. AGC Ser/Thr protein kinase family. In terms of assembly, homodimer. Interacts with IRS1. Interacts with RAF1. Interacts with RHOA (activated by GTP), RHOB and RHOC. Interacts with PPP1R12A. Interacts with EP300. Interacts with CHORDC1. Interacts with BRCA2. Interacts with NPM1; this interaction enhances ROCK2 activity. Interacts with SORL1. Interacts with PJVK. Mg(2+) is required as a cofactor. In terms of processing, autophosphorylated. Phosphorylation at Tyr-722 reduces its binding to RHOA and is crucial for focal adhesion dynamics. Dephosphorylation by PTPN11 stimulates its RHOA binding activity. Cleaved by granzyme B during apoptosis. This leads to constitutive activation of the kinase and membrane blebbing.

It is found in the cytoplasm. Its subcellular location is the cell membrane. The protein resides in the nucleus. The protein localises to the cytoskeleton. It localises to the microtubule organizing center. It is found in the centrosome. The catalysed reaction is L-seryl-[protein] + ATP = O-phospho-L-seryl-[protein] + ADP + H(+). It carries out the reaction L-threonyl-[protein] + ATP = O-phospho-L-threonyl-[protein] + ADP + H(+). Its activity is regulated as follows. Activated by RHOA binding. Inhibited by Y-27632. Its function is as follows. Protein kinase which is a key regulator of actin cytoskeleton and cell polarity. Involved in regulation of smooth muscle contraction, actin cytoskeleton organization, stress fiber and focal adhesion formation, neurite retraction, cell adhesion and motility via phosphorylation of ADD1, BRCA2, CNN1, EZR, DPYSL2, EP300, MSN, MYL9/MLC2, NPM1, RDX, PPP1R12A and VIM. Phosphorylates SORL1 and IRF4. Acts as a negative regulator of VEGF-induced angiogenic endothelial cell activation. Positively regulates the activation of p42/MAPK1-p44/MAPK3 and of p90RSK/RPS6KA1 during myogenic differentiation. Plays an important role in the timely initiation of centrosome duplication. Inhibits keratinocyte terminal differentiation. May regulate closure of the eyelids and ventral body wall through organization of actomyosin bundles. Plays a critical role in the regulation of spine and synaptic properties in the hippocampus. Plays an important role in generating the circadian rhythm of the aortic myofilament Ca(2+) sensitivity and vascular contractility by modulating the myosin light chain phosphorylation. The sequence is that of Rho-associated protein kinase 2 (ROCK2) from Sus scrofa (Pig).